The chain runs to 228 residues: ATP-dependent dethiobiotin synthetase BioD (228 aa).

12-17 provides a ligand contact to ATP; it reads EIGKTT. Thr-16 is a Mg(2+) binding site. Residue Lys-37 is part of the active site. Residue Ser-41 participates in substrate binding. ATP-binding positions include Asp-54, 116–119, and 205–207; these read EGAG and PRL. Asp-54 and Glu-116 together coordinate Mg(2+).

It belongs to the dethiobiotin synthetase family. Homodimer. It depends on Mg(2+) as a cofactor.

Its subcellular location is the cytoplasm. It carries out the reaction (7R,8S)-7,8-diammoniononanoate + CO2 + ATP = (4R,5S)-dethiobiotin + ADP + phosphate + 3 H(+). It participates in cofactor biosynthesis; biotin biosynthesis; biotin from 7,8-diaminononanoate: step 1/2. Functionally, catalyzes a mechanistically unusual reaction, the ATP-dependent insertion of CO2 between the N7 and N8 nitrogen atoms of 7,8-diaminopelargonic acid (DAPA, also called 7,8-diammoniononanoate) to form a ureido ring. The protein is ATP-dependent dethiobiotin synthetase BioD of Pseudomonas aeruginosa (strain ATCC 15692 / DSM 22644 / CIP 104116 / JCM 14847 / LMG 12228 / 1C / PRS 101 / PAO1).